The following is an 86-amino-acid chain: Large ribosomal subunit protein bL27 (86 aa).

A compositionally biased stretch (gly residues) spans 1 to 10 (MAQKKGGGST). Positions 1-21 (MAQKKGGGSTRNGRDSESKRL) are disordered.

This sequence belongs to the bacterial ribosomal protein bL27 family.

In Ralstonia pickettii (strain 12J), this protein is Large ribosomal subunit protein bL27.